The primary structure comprises 406 residues: Magnesium transporter NIPA4 (406 aa).

Residues 1-57 are Extracellular-facing; that stretch reads MELRVANANGSCENGSIVSLYCSSQEVLCQIVRGISPEEPYNATLITWQERVRKKYG. 3 N-linked (GlcNAc...) asparagine glycosylation sites follow: Asn-9, Asn-14, and Asn-42. Residues 58–78 traverse the membrane as a helical segment; sequence FYIGVGLAFLSCFLIGTSVIL. The Cytoplasmic portion of the chain corresponds to 79–126; sequence KKKGLIRLVATGATRAVNGGYGYLKDPMWWAGMATMSAGEVANFGAYA. A helical membrane pass occupies residues 127 to 147; that stretch reads FAPATVVTPLGALSVLISAIF. The Extracellular segment spans residues 148-155; sequence SSYCLGES. Residues 156-176 traverse the membrane as a helical segment; sequence LNLLGKLGCVICMAGSTVMVI. At 177 to 197 the chain is on the cytoplasmic side; it reads HAPKEEKVTTVAEMASKMKDT. Residues 198 to 218 form a helical membrane-spanning segment; that stretch reads GFIVFAVLLVVSCLILIFIVA. Over 219–225 the chain is Extracellular; it reads PRYGQRN. A helical transmembrane segment spans residues 226 to 246; the sequence is ILIYIIICSVIGSFSVTAVKG. At 247–263 the chain is on the cytoplasmic side; that stretch reads LGVTIRNFFQGLPVVRH. The helical transmembrane segment at 264–284 threads the bilayer; the sequence is PLPYILSLILGLSIIIQVNFL. Over 285–295 the chain is Extracellular; it reads NRALDIFNTSL. N-linked (GlcNAc...) asparagine glycosylation occurs at Asn-292. A helical membrane pass occupies residues 296 to 316; the sequence is VFPIYYVFFTTVVVASSIVLF. Residues 317–326 lie on the Cytoplasmic side of the membrane; sequence KEWYTMSAVD. A helical membrane pass occupies residues 327-347; the sequence is IVGTLSGFVTIILGVFMLHAF. The Extracellular portion of the chain corresponds to 348–406; that stretch reads KDLDINQISLPHTHKNPTPAPAPEPTVIKLEDKNVLVDNIELASTPSPQQKPKVFMTDS.

It belongs to the NIPA family.

It localises to the cell membrane. It catalyses the reaction Mg(2+)(in) = Mg(2+)(out). Acts as a Mg(2+) transporter. Can also transport other divalent cations such as Ba(2+), Sr(2+) and Fe(2+) but to a much less extent than Mg(2+). May be a receptor for ligands (trioxilins A3 and B3) from the hepoxilin pathway. In Mus musculus (Mouse), this protein is Magnesium transporter NIPA4 (Nipal4).